A 683-amino-acid chain; its full sequence is Solute carrier family 28 member 3 (683 aa).

A disordered region spans residues 1-71; it reads MSAFKARGVE…EEEEEGEEDQ (71 aa). Residues 1–97 are Cytoplasmic-facing; that stretch reads MSAFKARGVE…FYKRNKKIIH (97 aa). Residues 60–71 show a composition bias toward acidic residues; the sequence is DNEEEEEGEEDQ. The chain crosses the membrane as a helical span at residues 98–118; it reads YTFLGLLLVGYFALVIAACIV. Residues 119–123 are Extracellular-facing; it reads NFKQS. The helical transmembrane segment at 124-144 threads the bilayer; the sequence is LALLVLTLIAIFFFFWDLFIA. Residues 145–168 lie on the Cytoplasmic side of the membrane; that stretch reads KYGDKIAEALKPCQKFLDNHWSII. The helical transmembrane segment at 169 to 189 threads the bilayer; it reads RWFVYGALLLAVILWLTLDTA. At 190–192 the chain is on the extracellular side; that stretch reads KRG. A helical membrane pass occupies residues 193–214; that stretch reads ANQVIPFFGLILYILLVFIFSK. The Cytoplasmic segment spans residues 215–222; that stretch reads HPTKVRWR. The chain crosses the membrane as a helical span at residues 223–242; the sequence is IVIWGLLLQFIFGLIILRTK. At 243 to 279 the chain is on the extracellular side; sequence PGLDAFNWLGIQVQTFLKYTDAGSRFLFGDDFQDHFF. A helical transmembrane segment spans residues 280 to 300; the sequence is AFAVLPIVIFFSTVMSMMYYL. The Cytoplasmic portion of the chain corresponds to 301–324; the sequence is GLMQWLILKVGWLMQITMGTSPME. An intramembrane region (helical) is located at residues 325-343; the sequence is SMVSAGNIFVGQTESPLLI. Residues 344–356 lie on the Cytoplasmic side of the membrane; it reads RPYLADLTISEMH. A helical transmembrane segment spans residues 357–379; that stretch reads SVMSSGFATIAGSVLGAYISLGI. The Extracellular segment spans residues 380-381; the sequence is PA. Residues 382–403 form a helical membrane-spanning segment; sequence AHLLTASVMSAPAALAISKTFW. Residues 404 to 438 are Cytoplasmic-facing; it reads PETKKSKNSTQTSIKLEKGQENNLVEAASQGASAA. A helical transmembrane segment spans residues 439–464; that stretch reads VPLVANIAANLIAFLAVLAFINATLS. Residues 465–502 lie on the Extracellular side of the membrane; sequence WLGSMFNYPQFSFEIICSYVLMPFAFMMGVNYDDSFLV. An intramembrane region (helical) is located at residues 503–522; it reads AELLGMKTFFNEFVAYQRLS. The Extracellular segment spans residues 523–561; the sequence is EYIHNRESGGPLFVDGVRQYMSVRSEAIATYALCGFANF. Residues 562–572 traverse the membrane as a helical segment; sequence GSLGIMIGGLS. Over 573–585 the chain is Cytoplasmic; the sequence is SLAPHRKSDIASC. A helical transmembrane segment spans residues 586–608; it reads GIRALIAGTIACFSTACIAGVLY. Over 609 to 683 the chain is Extracellular; it reads IPELYCPNLL…GFNCSEVRPE (75 aa).

This sequence belongs to the concentrative nucleoside transporter (CNT) (TC 2.A.41) family. Homotrimer.

Its subcellular location is the cell membrane. The catalysed reaction is thymidine(out) + 2 Na(+)(out) = thymidine(in) + 2 Na(+)(in). It carries out the reaction cytidine(out) + 2 Na(+)(out) = cytidine(in) + 2 Na(+)(in). The enzyme catalyses uridine(out) + 2 Na(+)(out) = uridine(in) + 2 Na(+)(in). It catalyses the reaction adenosine(out) + 2 Na(+)(out) = adenosine(in) + 2 Na(+)(in). The catalysed reaction is guanosine(out) + 2 Na(+)(out) = guanosine(in) + 2 Na(+)(in). It carries out the reaction inosine(out) + 2 Na(+)(out) = inosine(in) + 2 Na(+)(in). Its function is as follows. Sodium-dependent, pyrimidine- and purine-selective. Involved in the homeostasis of endogenous nucleosides. Exhibits the transport characteristics of the nucleoside transport system cib or N3 subtype (N3/cib) (with marked transport of both thymidine and inosine). Employs a 2:1 sodium/nucleoside ratio. Also able to transport gemcitabine, 3'-azido-3'-deoxythymidine (AZT), ribavirin and 3-deazauridine. The sequence is that of Solute carrier family 28 member 3 (SLC28A3) from Eptatretus stoutii (Pacific hagfish).